Here is a 553-residue protein sequence, read N- to C-terminus: Membrane protein insertase YidC (553 aa).

The next 5 membrane-spanning stretches (helical) occupy residues 7-24, 365-385, 435-455, 474-494, and 509-529; these read VLWV…DNWQ, WGWA…PLSA, LPVV…LASV, PFFI…SLNP, and PIAF…YYVV.

It belongs to the OXA1/ALB3/YidC family. Type 1 subfamily. As to quaternary structure, interacts with the Sec translocase complex via SecD. Specifically interacts with transmembrane segments of nascent integral membrane proteins during membrane integration.

It is found in the cell inner membrane. Functionally, required for the insertion and/or proper folding and/or complex formation of integral membrane proteins into the membrane. Involved in integration of membrane proteins that insert both dependently and independently of the Sec translocase complex, as well as at least some lipoproteins. Aids folding of multispanning membrane proteins. In Burkholderia orbicola (strain MC0-3), this protein is Membrane protein insertase YidC.